The chain runs to 255 residues: DNA repair protein RecO (255 aa).

It belongs to the RecO family.

Its function is as follows. Involved in DNA repair and RecF pathway recombination. The sequence is that of DNA repair protein RecO from Bacillus velezensis (strain DSM 23117 / BGSC 10A6 / LMG 26770 / FZB42) (Bacillus amyloliquefaciens subsp. plantarum).